A 116-amino-acid chain; its full sequence is Protein BIC2 (116 aa).

Disordered regions lie at residues 1–33 (MKNT…TCFP) and 95–116 (DSGD…ESSC).

The protein localises to the nucleus. Its function is as follows. Regulates the blue-light dependent dimerization of CRY2 and formation of photobodies. Inhibits CRY phosphorylation. The protein is Protein BIC2 of Arabidopsis thaliana (Mouse-ear cress).